The sequence spans 74 residues: Psi-conotoxin PrIIIE (74 aa).

The first 19 residues, methionine 1–alanine 19, serve as a signal peptide directing secretion. A propeptide spanning residues leucine 20 to arginine 50 is cleaved from the precursor. Disulfide bonds link cysteine 54-cysteine 66, cysteine 55-cysteine 71, and cysteine 61-cysteine 72. Cysteine 72 bears the Cysteine amide mark.

This sequence belongs to the conotoxin M superfamily. Expressed by the venom duct.

It is found in the secreted. Functionally, psi-conotoxins act on postsynaptic membranes, and act as non-competitive antagonist of nicotinic acetylcholine receptors (nAChR). Reversibly inhibits both adult- and fetal-types nAChR. The inhibition potency against the adult- (alpha-1/beta-1/epsilon/delta) is higher than against the fetal-type (alpha-1/beta-1/gamma/delta). Induces flaccid paralysis in goldfish, but does not induce any remarkable behavior in mice and does not block action potential in directly stimulated frog muscle preparations. The polypeptide is Psi-conotoxin PrIIIE (Conus parius (Cone snail)).